The chain runs to 877 residues: Ewing's tumor-associated antigen 1 homolog (877 aa).

A disordered region spans residues 1–82 (MQLKDGGTGM…GRSPRGKETP (82 aa)). Residues 56 to 65 (AGTRSARRAQ) show a composition bias toward basic residues. Lys-87 participates in a covalent cross-link: Glycyl lysine isopeptide (Lys-Gly) (interchain with G-Cter in SUMO2). The ATR-activation domain (AAD) motif lies at 107-113 (IFWDQNS). Coiled-coil stretches lie at residues 185–213 (KTKNREKELMKLAQQFDKNMEELDVIQEQ) and 306–335 (AFLNNSKTSLRKKNALLQEEIITTETLLTE). Glycyl lysine isopeptide (Lys-Gly) (interchain with G-Cter in SUMO2) cross-links involve residues Lys-416 and Lys-444. The segment at 450–479 (PSKTRNGELRNAGEHRFSSHPGDESRKVPF) is disordered. Residues 454 to 476 (RNGELRNAGEHRFSSHPGDESRK) are compositionally biased toward basic and acidic residues. At Ser-467 the chain carries Phosphoserine. A Glycyl lysine isopeptide (Lys-Gly) (interchain with G-Cter in SUMO2) cross-link involves residue Lys-510. The RBM1 motif signature appears at 607–622 (GEVDDDLFCQACDDIE). Disordered regions lie at residues 626–664 (QQENKGSEESESVSYTSTRGSRSSSTASKQASQSAPSKH) and 818–877 (ANQQ…ISLP). Positions 637–662 (SVSYTSTRGSRSSSTASKQASQSAPS) are enriched in low complexity. Over residues 818–833 (ANQQQSSINYSESLKP) the composition is skewed to polar residues. The span at 840-859 (ERNRKYSPEEIQRKRQEALV) shows a compositional bias: basic and acidic residues. The short motif at 843-865 (RKYSPEEIQRKRQEALVRRKAKA) is the RBM2 motif element. Residues 868 to 877 (TVQSAPISLP) show a composition bias toward polar residues.

As to quaternary structure, interacts (via RBM1 motif) with RPA1. Interacts (via RBM2 motif) with RPA2. Interacts (via the ATR-activation domain motif) with ATR. Post-translationally, phosphorylated by ATR.

The protein resides in the nucleus. Replication stress response protein that accumulates at DNA damage sites and promotes replication fork progression and integrity. Recruited to stalled replication forks via interaction with the RPA complex and directly stimulates ATR kinase activity independently of TOPBP1. Probably only regulates a subset of ATR targets. The protein is Ewing's tumor-associated antigen 1 homolog of Mus musculus (Mouse).